The following is a 404-amino-acid chain: Advanced glycosylation end product-specific receptor (404 aa).

Residues 1 to 22 (MAAGTAVGAWVLVLSLWGAVVG) form the signal peptide. The region spanning 23 to 116 (AQNITARIGE…KETKSNYRVR (94 aa)) is the Ig-like V-type domain. Residues 23–342 (AQNITARIGE…VGGSGLGTLA (320 aa)) lie on the Extracellular side of the membrane. Asparagine 25 and asparagine 81 each carry an N-linked (GlcNAc...) asparagine glycan. Disulfide bonds link cysteine 38-cysteine 99 and cysteine 144-cysteine 208. 2 consecutive Ig-like C2-type domains span residues 124-221 (PEIV…RALR) and 227-317 (PRVW…RAVS). Residues 343–363 (LALGILGGLGTAALLIGVILW) form a helical membrane-spanning segment. The Cytoplasmic segment spans residues 364-404 (QRRQRRGEERKAPENQEEEEERAELNQSEEPEAGESSTGGP). The segment at 367–404 (QRRGEERKAPENQEEEEERAELNQSEEPEAGESSTGGP) is disordered. Positions 378–396 (NQEEEEERAELNQSEEPEA) are enriched in acidic residues. Serine 391 carries the phosphoserine; by PKC/PRKCZ and ATM modification.

Constitutive homodimer; disulfide-linked. Forms homooligomers. Interacts with S100A1 and APP. Interacts with S100B, S100A12 and S100A14. Interacts with TIRAP. Interacts with HMGB1. Interacts with LGP2; this interaction plays an important role in AGER-mediated pro-inflammatory responses and cytokine release. Interacts with double-strand break repair protein MRE11 which is a core component of the MRN complex. The interaction enhances MRE11 endonuclease activity and promotes DNA repair. Interacts with the MCM2-7 complex via interaction with complex member MCM2; the interaction is increased following DNA replication stress and stabilizes the MCM2-7 complex at replication forks. Interacts with longistatin, a protein from the saliva of the tick, Haemaphysalis longicornis; the interaction attenuates AGER-mediated production of reactive oxygen species (ROS), activation of NF-kappa-B and expression of adhesion molecules and cytokines in human endothelial cells. Phosphorylated on its cytoplasmic domain by PKCzeta/PRKCZ upon ligand binding. Phosphorylated by ATM following DNA damage. In terms of processing, targeted by the ubiquitin E3 ligase subunit FBXO10 to mediate its ubiquitination and degradation. In terms of tissue distribution, endothelial cells. Increased expression in pre-term labor and preeclampsia placentas compared to controls.

It is found in the cell membrane. The protein resides in the cell projection. Its subcellular location is the phagocytic cup. It localises to the early endosome. The protein localises to the nucleus. It is found in the secreted. Cell surface pattern recognition receptor that senses endogenous stress signals with a broad ligand repertoire including advanced glycation end products, S100 proteins, high-mobility group box 1 protein/HMGB1, amyloid beta/APP oligomers, nucleic acids, histones, phospholipids and glycosaminoglycans. Advanced glycosylation end products are nonenzymatically glycosylated proteins which accumulate in vascular tissue in aging and at an accelerated rate in diabetes. These ligands accumulate at inflammatory sites during the pathogenesis of various diseases including diabetes, vascular complications, neurodegenerative disorders and cancers, and RAGE transduces their binding into pro-inflammatory responses. Upon ligand binding, uses TIRAP and MYD88 as adapters to transduce the signal ultimately leading to the induction of inflammatory cytokines IL6, IL8 and TNFalpha through activation of NF-kappa-B. Interaction with S100A12 on endothelium, mononuclear phagocytes, and lymphocytes triggers cellular activation, with generation of key pro-inflammatory mediators. Interaction with S100B after myocardial infarction may play a role in myocyte apoptosis by activating ERK1/2 and p53/TP53 signaling. Contributes to the translocation of amyloid-beta peptide (ABPP) across the cell membrane from the extracellular to the intracellular space in cortical neurons. ABPP-initiated RAGE signaling, especially stimulation of p38 mitogen-activated protein kinase (MAPK), has the capacity to drive a transport system delivering ABPP as a complex with RAGE to the intraneuronal space. Participates in endothelial albumin transcytosis together with HMGB1 through the RAGE/SRC/Caveolin-1 pathway, leading to endothelial hyperpermeability. Mediates the loading of HMGB1 in extracellular vesicles (EVs) that shuttle HMGB1 to hepatocytes by transferrin-mediated endocytosis and subsequently promote hepatocyte pyroptosis by activating the NLRP3 inflammasome. Binds to DNA and promotes extracellular hypomethylated DNA (CpG DNA) uptake by cells via the endosomal route to activate inflammatory responses. Mediates phagocytosis by non-professional phagocytes (NPP) and this is enhanced by binding to ligands including RNA, DNA, HMGB1 and histones. Promotes NPP-mediated phagocytosis of Saccharomyces cerevisiae spores by binding to RNA attached to the spore wall. Also promotes NPP-mediated phagocytosis of apoptotic cells. Following DNA damage, recruited to DNA double-strand break sites where it colocalizes with the MRN repair complex via interaction with double-strand break repair protein MRE11. Enhances the endonuclease activity of MRE11, promoting the end resection of damaged DNA. Promotes DNA damage repair in trophoblasts which enhances trophoblast invasion and contributes to placental development and maintenance. Protects cells from DNA replication stress by localizing to damaged replication forks where it stabilizes the MCM2-7 complex and promotes faithful progression of the replication fork. Mediates the production of reactive oxygen species (ROS) in human endothelial cells. This chain is Advanced glycosylation end product-specific receptor (AGER), found in Homo sapiens (Human).